We begin with the raw amino-acid sequence, 121 residues long: Keratin-associated protein 1-4 (121 aa).

The protein belongs to the KRTAP type 1 family. Interacts with hair keratins. As to expression, expressed in the middle/upper portions of the hair cortex, in the region termed the keratogenous zone.

Functionally, in the hair cortex, hair keratin intermediate filaments are embedded in an interfilamentous matrix, consisting of hair keratin-associated proteins (KRTAP), which are essential for the formation of a rigid and resistant hair shaft through their extensive disulfide bond cross-linking with abundant cysteine residues of hair keratins. The matrix proteins include the high-sulfur and high-glycine-tyrosine keratins. The sequence is that of Keratin-associated protein 1-4 (KRTAP1-4) from Homo sapiens (Human).